A 70-amino-acid polypeptide reads, in one-letter code: Large ribosomal subunit protein bL31 (70 aa).

Residues Cys16, Cys18, Cys37, and Cys40 each contribute to the Zn(2+) site.

This sequence belongs to the bacterial ribosomal protein bL31 family. Type A subfamily. As to quaternary structure, part of the 50S ribosomal subunit. It depends on Zn(2+) as a cofactor.

Functionally, binds the 23S rRNA. The sequence is that of Large ribosomal subunit protein bL31 from Haemophilus influenzae (strain PittEE).